We begin with the raw amino-acid sequence, 406 residues long: S-adenosylmethionine synthase (406 aa).

Residue histidine 5 participates in ATP binding. Aspartate 7 contributes to the Mg(2+) binding site. Glutamate 33 contributes to the K(+) binding site. L-methionine is bound by residues glutamate 46 and glutamine 89. Residues 89-99 form a flexible loop region; sequence QSPDIAQGVDT. ATP is bound by residues 164–166, 240–241, aspartate 249, 255–256, alanine 272, and lysine 276; these read DGK, KF, and RK. Aspartate 249 contacts L-methionine. Lysine 280 provides a ligand contact to L-methionine.

This sequence belongs to the AdoMet synthase family. Homotetramer; dimer of dimers. It depends on Mg(2+) as a cofactor. Requires K(+) as cofactor.

The protein localises to the cytoplasm. It catalyses the reaction L-methionine + ATP + H2O = S-adenosyl-L-methionine + phosphate + diphosphate. It participates in amino-acid biosynthesis; S-adenosyl-L-methionine biosynthesis; S-adenosyl-L-methionine from L-methionine: step 1/1. Functionally, catalyzes the formation of S-adenosylmethionine (AdoMet) from methionine and ATP. The overall synthetic reaction is composed of two sequential steps, AdoMet formation and the subsequent tripolyphosphate hydrolysis which occurs prior to release of AdoMet from the enzyme. The chain is S-adenosylmethionine synthase from Synechococcus sp. (strain ATCC 27144 / PCC 6301 / SAUG 1402/1) (Anacystis nidulans).